The following is a 428-amino-acid chain: MEALKVEKFTTANRGNGLRAVAPLRPGELLFRSDPLAYTVCKGSRGVVCDRCLLGKEKLMRCSQCRIAKYCSAKCQKKAWPDHRRECSCLKSCKPRYPPDSVRLLGRVIVKLMDEKPSESEKLYSFYDLESNISKLTEDKKEGLRQLAMTFQHFMREEIQDASQLPPSFDLFEAFAKVICNSFTICNAEMQEVGVGLYPSMSLLNHSCDPNCSIVFNGPHLLLRAVREIEAGEELTICYLDMLMTSEERRKQLRDQYCFECDCIRCQTQDKDADMLTGDEQIWKEVQESLKKIEELKAHWKWEQVLALCQAIINSNSNRLPDINIYQLKVLDCAMDACINLGMLEEALFYAMRTMEPYRIFFPGSHPVRGVQVMKVGKLQLHQGMFPQAMKNLRLAFDIMKVTHGREHSLIEDLILLLEECDANIRAS.

Position 1 is an N-acetylmethionine (Met1). One can recognise an SET domain in the interval 4-240 (LKVEKFTTAN…AGEELTICYL (237 aa)). S-adenosyl-L-methionine is bound at residue 14-16 (RGN). 8 residues coordinate Zn(2+): Cys49, Cys52, Cys62, Cys65, Cys71, Cys75, His83, and Cys87. The MYND-type zinc-finger motif lies at 49–87 (CDRCLLGKEKLMRCSQCRIAKYCSAKCQKKAWPDHRREC). S-adenosyl-L-methionine contacts are provided by residues Tyr124, Asn132, 205–206 (NH), Tyr239, and Phe259. The tract at residues 272 to 428 (DADMLTGDEQ…EECDANIRAS (157 aa)) is C-terminal domain; essential for histone methyltransferase activity, nuclear localization and mediates interaction with HSP90AA1.

Belongs to the class V-like SAM-binding methyltransferase superfamily. Histone-lysine methyltransferase family. As to quaternary structure, interacts with HSPCA. Interacts with HELZ. Interacts with POLR2A; the interaction may be indirect and may be mediated by HELZ. Interacts with HSP90AA1; this interaction enhances SMYD3 histone-lysine N-methyltransferase.

The protein localises to the cytoplasm. Its subcellular location is the nucleus. The enzyme catalyses L-lysyl(4)-[histone H3] + 3 S-adenosyl-L-methionine = N(6),N(6),N(6)-trimethyl-L-lysyl(4)-[histone H3] + 3 S-adenosyl-L-homocysteine + 3 H(+). With respect to regulation, histone methyltransferase activity strongly stimulated by HSPCA. Histone methyltransferase. Specifically methylates 'Lys-4' of histone H3, inducing di- and tri-methylation, but not monomethylation. Also methylates 'Lys-5' of histone H4. Plays an important role in transcriptional activation as a member of an RNA polymerase complex. Binds DNA containing 5'-CCCTCC-3' or 5'-GAGGGG-3' sequences. The polypeptide is Histone-lysine N-methyltransferase SMYD3 (Smyd3) (Mus musculus (Mouse)).